The following is a 95-amino-acid chain: Class I hydrophobin 13 (95 aa).

Cystine bridges form between cysteine 14–cysteine 74, cysteine 21–cysteine 68, cysteine 22–cysteine 55, and cysteine 75–cysteine 88. 2 N-linked (GlcNAc...) asparagine glycosylation sites follow: asparagine 23 and asparagine 77.

It belongs to the fungal hydrophobin family. In terms of assembly, self-assembles to form functional amyloid fibrils called rodlets. Self-assembly into fibrillar rodlets occurs spontaneously at hydrophobic:hydrophilic interfaces and the rodlets further associate laterally to form amphipathic monolayers.

The protein localises to the secreted. The protein resides in the cell wall. Functionally, aerial growth, conidiation, and dispersal of filamentous fungi in the environment rely upon a capability of their secreting small amphipathic proteins called hydrophobins (HPBs) with low sequence identity. Class I can self-assemble into an outermost layer of rodlet bundles on aerial cell surfaces, conferring cellular hydrophobicity that supports fungal growth, development and dispersal; whereas Class II form highly ordered films at water-air interfaces through intermolecular interactions but contribute nothing to the rodlet structure. The polypeptide is Class I hydrophobin 13 (Pleurotus ostreatus (strain PC15) (Oyster mushroom)).